We begin with the raw amino-acid sequence, 325 residues long: Germination protease (325 aa).

A propeptide spanning residues 1 to 7 is cleaved from the precursor; it reads MYNVRTD.

It belongs to the peptidase A25 family. Homotetramer. Autoproteolytically processed. The inactive tetrameric zymogen termed p46 autoprocesses to a smaller form termed p41, which is active only during spore germination.

It catalyses the reaction Endopeptidase action with P4 Glu or Asp, P1 preferably Glu &gt; Asp, P1' hydrophobic and P2' Ala.. Initiates the rapid degradation of small, acid-soluble proteins during spore germination. This chain is Germination protease, found in Clostridium perfringens (strain SM101 / Type A).